The primary structure comprises 287 residues: Pyridoxal kinase PdxY (287 aa).

Substrate contacts are provided by residues Ser-9 and Met-44–Gln-45. Residues Asp-111, Ala-142, Glu-147, and Lys-180 each coordinate ATP. Asp-221 is a binding site for substrate.

The protein belongs to the pyridoxine kinase family. PdxY subfamily. In terms of assembly, homodimer. The cofactor is Mg(2+).

It carries out the reaction pyridoxal + ATP = pyridoxal 5'-phosphate + ADP + H(+). It participates in cofactor metabolism; pyridoxal 5'-phosphate salvage; pyridoxal 5'-phosphate from pyridoxal: step 1/1. Functionally, pyridoxal kinase involved in the salvage pathway of pyridoxal 5'-phosphate (PLP). Catalyzes the phosphorylation of pyridoxal to PLP. The chain is Pyridoxal kinase PdxY from Burkholderia mallei (strain ATCC 23344).